A 585-amino-acid polypeptide reads, in one-letter code: RNA polymerase sigma factor RpoD (585 aa).

A disordered region spans residues 67–93 (PASTLVPKDDSKPARKKKESSASTSGS). A sigma-70 factor domain-2 region spans residues 351–421 (LVKANLRLVV…TRAISDQART (71 aa)). The Interaction with polymerase core subunit RpoC motif lies at 375-378 (DLIQ). Positions 430 to 506 (EQVNKVIRET…DTEVETPVNA (77 aa)) are sigma-70 factor domain-3. The segment at 519 to 572 (VLHTLPAREQKVIRMRFGLDDGYPQTLEEVGYQFKVTRERIRQIEAKALRRLRH) is sigma-70 factor domain-4. The segment at residues 545–564 (LEEVGYQFKVTRERIRQIEA) is a DNA-binding region (H-T-H motif).

It belongs to the sigma-70 factor family. RpoD/SigA subfamily. As to quaternary structure, interacts transiently with the RNA polymerase catalytic core.

It is found in the cytoplasm. Functionally, sigma factors are initiation factors that promote the attachment of RNA polymerase to specific initiation sites and are then released. This sigma factor is the primary sigma factor during exponential growth. In Leptospira interrogans serogroup Icterohaemorrhagiae serovar copenhageni (strain Fiocruz L1-130), this protein is RNA polymerase sigma factor RpoD.